A 260-amino-acid polypeptide reads, in one-letter code: Collagenase (260 aa).

The N-terminal stretch at Met1–Ala16 is a signal peptide. The propeptide occupies Phe17–Arg30. A Peptidase S1 domain is found at Ile31–Gly257. Residues Cys60 and Cys76 are joined by a disulfide bond. Residues His75 and Asp118 each act as charge relay system in the active site. 2 disulfides stabilise this stretch: Cys181/Cys196 and Cys206/Cys234. The Charge relay system role is filled by Ser210.

The protein belongs to the peptidase S1 family.

The protein resides in the secreted. It carries out the reaction Hydrolysis of proteins including native collagen at Xaa-|-Ala bond leaving an N-terminal (75%) and a C-terminal (25%) fragment.. Its activity is regulated as follows. Inhibited by diisopropylfluorophosphate. This enzyme is a serine protease capable of degrading the native triple helix of collagen. Also cleaves the B chain of insulin at the 15-Leu-|-Try-16 and 22-Arg-|-Gly-23 bonds. Hydrolyzes casein, but not Px-Pro-Leu-Gly-Pro-DArg, BzArgNHPh, AcTyrNHPh, 2-naphthyl phosphate, 2-naphthyl butyrate, 2-naphthyl caprylate, 2-naphthyl myristate, L-leucine 2-2-naphthylamide, L-valine 2-naphthylamide, L-cysteine 2-naphthylamide or L-glutarylphenylalanine 2-naphthylamide. The sequence is that of Collagenase from Hypoderma lineatum (Early cattle grub).